A 278-amino-acid polypeptide reads, in one-letter code: S-formylglutathione hydrolase YeiG (278 aa).

Residues S145, D223, and H256 each act as charge relay system in the active site.

It belongs to the esterase D family.

The enzyme catalyses S-formylglutathione + H2O = formate + glutathione + H(+). Serine hydrolase involved in the detoxification of formaldehyde. Hydrolyzes S-formylglutathione to glutathione and formate. The protein is S-formylglutathione hydrolase YeiG (yeiG) of Shigella dysenteriae serotype 1 (strain Sd197).